The following is a 75-amino-acid chain: MNSKYLFVFLILNVIFIDLCQGFLFNVIPHAINATASLIKKGTRRRELGSQYDYLQDFRKRELDLDDLLSKFPDY.

Residues 1 to 22 form the signal peptide; that stretch reads MNSKYLFVFLILNVIFIDLCQG. Lys-41 carries the post-translational modification Lysine amide. Positions 42-75 are excised as a propeptide; the sequence is GTRRRELGSQYDYLQDFRKRELDLDDLLSKFPDY.

It belongs to the non-disulfide-bridged peptide (NDBP) superfamily. Short antimicrobial peptide (group 4) family. Expressed by the venom gland.

The protein resides in the secreted. In Chaerilus tricostatus (Scorpion), this protein is Peptide Ctri9610.